A 125-amino-acid polypeptide reads, in one-letter code: Holo-[acyl-carrier-protein] synthase (125 aa).

Positions 9 and 58 each coordinate Mg(2+).

It belongs to the P-Pant transferase superfamily. AcpS family. The cofactor is Mg(2+).

It is found in the cytoplasm. The enzyme catalyses apo-[ACP] + CoA = holo-[ACP] + adenosine 3',5'-bisphosphate + H(+). In terms of biological role, transfers the 4'-phosphopantetheine moiety from coenzyme A to a Ser of acyl-carrier-protein. This Shewanella amazonensis (strain ATCC BAA-1098 / SB2B) protein is Holo-[acyl-carrier-protein] synthase.